A 445-amino-acid polypeptide reads, in one-letter code: tRNA-2-methylthio-N(6)-dimethylallyladenosine synthase (445 aa).

The MTTase N-terminal domain occupies 7-121 (KTFYIETFGC…LPEMLVQLEA (115 aa)). C16, C52, C84, C158, C162, and C165 together coordinate [4Fe-4S] cluster. Residues 144–374 (RDNPHRAYLT…QEKQRAIQIR (231 aa)) form the Radical SAM core domain. In terms of domain architecture, TRAM spans 377-443 (AEMIGSIQEV…PNSLVGESAA (67 aa)).

The protein belongs to the methylthiotransferase family. MiaB subfamily. As to quaternary structure, monomer. It depends on [4Fe-4S] cluster as a cofactor.

The protein localises to the cytoplasm. The catalysed reaction is N(6)-dimethylallyladenosine(37) in tRNA + (sulfur carrier)-SH + AH2 + 2 S-adenosyl-L-methionine = 2-methylsulfanyl-N(6)-dimethylallyladenosine(37) in tRNA + (sulfur carrier)-H + 5'-deoxyadenosine + L-methionine + A + S-adenosyl-L-homocysteine + 2 H(+). Its function is as follows. Catalyzes the methylthiolation of N6-(dimethylallyl)adenosine (i(6)A), leading to the formation of 2-methylthio-N6-(dimethylallyl)adenosine (ms(2)i(6)A) at position 37 in tRNAs that read codons beginning with uridine. This is tRNA-2-methylthio-N(6)-dimethylallyladenosine synthase from Solibacter usitatus (strain Ellin6076).